Here is a 417-residue protein sequence, read N- to C-terminus: D-amino acid dehydrogenase (417 aa).

3-17 (VVILGSGVVGVSTAW) lines the FAD pocket.

Belongs to the DadA oxidoreductase family. FAD serves as cofactor.

It carries out the reaction a D-alpha-amino acid + A + H2O = a 2-oxocarboxylate + AH2 + NH4(+). It functions in the pathway amino-acid degradation; D-alanine degradation; NH(3) and pyruvate from D-alanine: step 1/1. Functionally, oxidative deamination of D-amino acids. This chain is D-amino acid dehydrogenase, found in Pectobacterium carotovorum subsp. carotovorum (strain PC1).